The primary structure comprises 301 residues: MQAVKVFEVGPRDGLQNERQPLSVAARVGLIGELAGTGLRHIEAGAFVSPRWVPQMAGSDEVLRQLPSNDGVSYTALVPNRQGFEAAQRAGCREVAVFAAASEAFSRNNINCSIDESFERFTPVLRAANEASIRVRGYVSCVLGCPFSGAVAPEAVAKVARRLYELGCYEISLGDTIGAGRPDETAQLFELCARQLPVAALAGHFHDTWGMAIANVHAALAQGVRTFDSSVAGLGGCPYSPGASGNVATEDLLYLLHGLGYSTGVDLEAVAQVGVRISAQLGTANRSRAGLALAARSAREH.

A Pyruvate carboxyltransferase domain is found at 4 to 271 (VKVFEVGPRD…STGVDLEAVA (268 aa)). Arg-12 is a binding site for substrate. The a divalent metal cation site is built by Asp-13, His-204, and His-206. Cys-237 is an active-site residue. Asn-246 contributes to the a divalent metal cation binding site.

This sequence belongs to the HMG-CoA lyase family.

The enzyme catalyses (3S)-3-hydroxy-3-methylglutaryl-CoA = acetoacetate + acetyl-CoA. The protein operates within metabolic intermediate metabolism; (S)-3-hydroxy-3-methylglutaryl-CoA degradation; acetoacetate from (S)-3-hydroxy-3-methylglutaryl-CoA: step 1/1. Involved in the catabolism of branched amino acids such as leucine. The polypeptide is Hydroxymethylglutaryl-CoA lyase (mvaB) (Pseudomonas mevalonii).